Reading from the N-terminus, the 285-residue chain is MLTCKAFAKINWAISVLKKRDDGYHDIISLMQAIDLHDTLIFKSSQKIEIETDLLIKKENNLVYKAIKALQNYTGIKKGVTVILKKEIPLGAGLGGGSSDAATTLKALNELWQLNLDIKTLHEIGASIGSDIPFFFYLPICIVEGRGDVVKPLKISKSYTLLLVKPDFSISTEWAYKTLDLKTELTTEYEKINNNIWQLYNHLYSGDVDNFYLWNDLEKSVLEKYPEIDKIKRKLIEAGAKSSLLSGSGSTVFGLFNNKTDAQKALKFFEGYWCRVVQTLVEPLK.

Lys-9 is a catalytic residue. An ATP-binding site is contributed by 89–99; the sequence is PLGAGLGGGSS. Residue Asp-131 is part of the active site.

Belongs to the GHMP kinase family. IspE subfamily.

It carries out the reaction 4-CDP-2-C-methyl-D-erythritol + ATP = 4-CDP-2-C-methyl-D-erythritol 2-phosphate + ADP + H(+). It functions in the pathway isoprenoid biosynthesis; isopentenyl diphosphate biosynthesis via DXP pathway; isopentenyl diphosphate from 1-deoxy-D-xylulose 5-phosphate: step 3/6. Catalyzes the phosphorylation of the position 2 hydroxy group of 4-diphosphocytidyl-2C-methyl-D-erythritol. The protein is 4-diphosphocytidyl-2-C-methyl-D-erythritol kinase of Thermodesulfovibrio yellowstonii (strain ATCC 51303 / DSM 11347 / YP87).